A 506-amino-acid polypeptide reads, in one-letter code: Galactose/methyl galactoside import ATP-binding protein MglA (506 aa).

ABC transporter domains are found at residues 14 to 249 (LEMS…VGRS) and 264 to 506 (VILE…SLHL). Position 46–53 (46–53 (GENGAGKS)) interacts with ATP.

This sequence belongs to the ABC transporter superfamily. Galactose/methyl galactoside importer (TC 3.A.1.2.3) family. As to quaternary structure, the complex is composed of one ATP-binding protein (MglA), two transmembrane proteins (MglC) and a solute-binding protein (MglB).

The protein resides in the cell inner membrane. It carries out the reaction D-galactose(out) + ATP + H2O = D-galactose(in) + ADP + phosphate + H(+). The enzyme catalyses methyl beta-D-galactoside(out) + ATP + H2O = methyl beta-D-galactoside(in) + ADP + phosphate + H(+). Functionally, part of the ABC transporter complex MglABC involved in galactose/methyl galactoside import. Responsible for energy coupling to the transport system. The polypeptide is Galactose/methyl galactoside import ATP-binding protein MglA (Shigella flexneri serotype 5b (strain 8401)).